A 347-amino-acid polypeptide reads, in one-letter code: Protein RecA (347 aa).

Gly-65 to Thr-72 provides a ligand contact to ATP. The segment covering Lys-327–Glu-336 has biased composition (basic and acidic residues). The tract at residues Lys-327–Met-347 is disordered. Positions Glu-337–Met-347 are enriched in acidic residues.

This sequence belongs to the RecA family.

The protein resides in the cytoplasm. Can catalyze the hydrolysis of ATP in the presence of single-stranded DNA, the ATP-dependent uptake of single-stranded DNA by duplex DNA, and the ATP-dependent hybridization of homologous single-stranded DNAs. It interacts with LexA causing its activation and leading to its autocatalytic cleavage. In Xylella fastidiosa (strain M23), this protein is Protein RecA.